A 261-amino-acid polypeptide reads, in one-letter code: 3-deoxy-manno-octulosonate cytidylyltransferase (261 aa).

Belongs to the KdsB family.

It localises to the cytoplasm. The enzyme catalyses 3-deoxy-alpha-D-manno-oct-2-ulosonate + CTP = CMP-3-deoxy-beta-D-manno-octulosonate + diphosphate. The protein operates within nucleotide-sugar biosynthesis; CMP-3-deoxy-D-manno-octulosonate biosynthesis; CMP-3-deoxy-D-manno-octulosonate from 3-deoxy-D-manno-octulosonate and CTP: step 1/1. It participates in bacterial outer membrane biogenesis; lipopolysaccharide biosynthesis. Activates KDO (a required 8-carbon sugar) for incorporation into bacterial lipopolysaccharide in Gram-negative bacteria. In Dechloromonas aromatica (strain RCB), this protein is 3-deoxy-manno-octulosonate cytidylyltransferase.